The primary structure comprises 149 residues: MQIWVDADACPSVIKDVLFRVADRLQVQVTLVANKLLRTPPSRFIRAIQVPAGFDVADNEIVRLVQEGDLVITGDIPLAADVLEKGGLPLNPRGEFYTKDTIQQQLTMRTFMDELRSSGVDTGGPAAFSQSDTRNFANQLDRFLTRTGK.

It belongs to the UPF0178 family.

The chain is UPF0178 protein HEAR0259 from Herminiimonas arsenicoxydans.